The sequence spans 400 residues: Large envelope protein (400 aa).

Residue M1 is modified to N-acetylmethionine. Disordered regions lie at residues 1 to 50 (MGGW…PHKD) and 84 to 116 (ILTS…RDTH). G2 carries the N-myristoyl glycine; by host lipid modification. Residues 2 to 119 (GGWSSKPRKG…PPLRDTHPQA (118 aa)) are pre-S1. The interval 2-174 (GGWSSKPRKG…LSTTGDPVPN (173 aa)) is pre-S. Topologically, residues 2–181 (GGWSSKPRKG…VPNMENIASG (180 aa)) are virion surface; in external conformation. Residues 2-253 (GGWSSKPRKG…PGYRWMYLRR (252 aa)) lie on the Intravirion; in internal conformation side of the membrane. N-linked (GlcNAc...) asparagine glycosylation is present at W4. Residues 96–106 (STNRQSGRQPT) show a composition bias toward polar residues. A pre-S2 region spans residues 120–174 (MQWNSTTFHQTLQDPRVRALYLPAGGSSSGTVSPAQNTVSAISSILSTTGDPVPN). Residues 182 to 202 (LLGPLLVLQAGFFSLTKILTI) form a helical membrane-spanning segment. At 203-253 (PQSLDSWWTSLSFLGGTPVCLGQNSQSPISSHSPTCCPPICPGYRWMYLRR) the chain is on the intravirion; in external conformation side. Residues 254–274 (FIIXLCILLLCLIFLLVLLDY) traverse the membrane as a helical segment. Residues 275-348 (QGMLPVCPLI…WASVRFSWLS (74 aa)) lie on the Virion surface side of the membrane. N-linked (GlcNAc...) asparagine; by host glycosylation occurs at N320. A helical membrane pass occupies residues 349–369 (LLVPFVQWFVGLSPTVWLSVI). The Intravirion portion of the chain corresponds to 370 to 375 (WMMWYW). Residues 376-398 (GPSLYNILSPFMPLLPIFFCLWV) traverse the membrane as a helical segment. Topologically, residues 399–400 (YI) are virion surface.

Belongs to the orthohepadnavirus major surface antigen family. As to quaternary structure, interacts (via its myristoylated pre-S1 region) with the host SLC10A1/NTCP; this interaction is essential for viral entry. In its internal form (Li-HBsAg), interacts with the capsid protein and with the isoform S. Interacts with host chaperone CANX. In terms of assembly, associates with host chaperone CANX through its pre-S2 N glycan; this association may be essential for isoform M proper secretion. As to quaternary structure, interacts with isoform L. Interacts with the antigens of satellite virus HDV (HDVAgs); this interaction is required for encapsidation of HDV genomic RNA. Post-translationally, isoform M is N-terminally acetylated by host at a ratio of 90%, and N-glycosylated by host at the pre-S2 region. Myristoylated; this modification is essential for its interaction with the host protein SLC10A1/NTCP.

The protein resides in the virion membrane. Functionally, the large envelope protein exists in two topological conformations, one which is termed 'external' or Le-HBsAg and the other 'internal' or Li-HBsAg. In its external conformation the protein attaches the virus to cell receptors and thereby initiating infection. This interaction determines the species specificity and liver tropism. This attachment induces virion internalization predominantly through caveolin-mediated endocytosis. The large envelope protein also assures fusion between virion membrane and endosomal membrane. In its internal conformation the protein plays a role in virion morphogenesis and mediates the contact with the nucleocapsid like a matrix protein. In terms of biological role, the middle envelope protein plays an important role in the budding of the virion. It is involved in the induction of budding in a nucleocapsid independent way. In this process the majority of envelope proteins bud to form subviral lipoprotein particles of 22 nm of diameter that do not contain a nucleocapsid. This chain is Large envelope protein, found in Hepatitis B virus genotype B1 (isolate Japan/Ry30/2002) (HBV-B).